Reading from the N-terminus, the 300-residue chain is N-acetylmuramic acid 6-phosphate etherase 1 (300 aa).

The SIS domain maps to alanine 59–asparagine 222. Catalysis depends on glutamate 87, which acts as the Proton donor. The active site involves glutamate 118.

Belongs to the GCKR-like family. MurNAc-6-P etherase subfamily. Homodimer.

The enzyme catalyses N-acetyl-D-muramate 6-phosphate + H2O = N-acetyl-D-glucosamine 6-phosphate + (R)-lactate. The protein operates within amino-sugar metabolism; N-acetylmuramate degradation. In terms of biological role, specifically catalyzes the cleavage of the D-lactyl ether substituent of MurNAc 6-phosphate, producing GlcNAc 6-phosphate and D-lactate. The chain is N-acetylmuramic acid 6-phosphate etherase 1 from Enterococcus faecalis (strain ATCC 700802 / V583).